The primary structure comprises 283 residues: Octanoyl-[GcvH]:protein N-octanoyltransferase (283 aa).

Positions 42–248 constitute a BPL/LPL catalytic domain; it reads GQSDAVVRTW…TLQSFGGELY (207 aa). C147 (acyl-thioester intermediate) is an active-site residue.

Belongs to the octanoyltransferase LipL family.

It catalyses the reaction N(6)-octanoyl-L-lysyl-[glycine-cleavage complex H protein] + L-lysyl-[lipoyl-carrier protein] = N(6)-octanoyl-L-lysyl-[lipoyl-carrier protein] + L-lysyl-[glycine-cleavage complex H protein]. Its pathway is protein modification; protein lipoylation via endogenous pathway; protein N(6)-(lipoyl)lysine from octanoyl-[acyl-carrier-protein]. Its function is as follows. Catalyzes the amidotransfer (transamidation) of the octanoyl moiety from octanoyl-GcvH to the lipoyl domain of the E2 subunit of lipoate-dependent enzymes. The chain is Octanoyl-[GcvH]:protein N-octanoyltransferase from Geobacillus kaustophilus (strain HTA426).